Consider the following 482-residue polypeptide: Cysteine--tRNA ligase (482 aa).

Cys29 is a binding site for Zn(2+). The short motif at Val31–His41 is the 'HIGH' region element. Positions 213, 238, and 242 each coordinate Zn(2+). The short motif at Lys275–Ser279 is the 'KMSKS' region element. Residue Lys278 coordinates ATP.

The protein belongs to the class-I aminoacyl-tRNA synthetase family. Monomer. The cofactor is Zn(2+).

It is found in the cytoplasm. It carries out the reaction tRNA(Cys) + L-cysteine + ATP = L-cysteinyl-tRNA(Cys) + AMP + diphosphate. The sequence is that of Cysteine--tRNA ligase from Gloeobacter violaceus (strain ATCC 29082 / PCC 7421).